Here is a 393-residue protein sequence, read N- to C-terminus: Metal tolerance protein C2 (393 aa).

Residues 1 to 23 (MERSISFNPRGDNELPDDRSSDV) are disordered. Residues 1 to 113 (MERSISFNPR…VTSGNRQMKR (113 aa)) are Cytoplasmic-facing. Positions 11-21 (GDNELPDDRSS) are enriched in basic and acidic residues. A helical transmembrane segment spans residues 114-134 (LFLLIALNVLYSTTELSIGIF). Residues 135 to 139 (TGRVG) lie on the Vacuolar side of the membrane. The chain crosses the membrane as a helical span at residues 140–160 (LVSDAFHLTFGCGLLTFSLFA). The Cytoplasmic segment spans residues 161 to 186 (MATSRKKPDHAYSYGYKRLEVLSAFT). A helical membrane pass occupies residues 187–207 (NALFLMFMSFSLAVEALHAFI). Residues 208-214 (QDESEHK) are Vacuolar-facing. The chain crosses the membrane as a helical span at residues 215 to 235 (HYLIVSAVTNLLVNLLGVWFF). Residues 236 to 259 (RNYARVNIAYRKAEDMNYHSVCLH) lie on the Cytoplasmic side of the membrane. The helical transmembrane segment at 260-280 (VISDSIRSAGLILASWLLSLG) threads the bilayer. Over 281-283 (VEN) the chain is Vacuolar. The helical transmembrane segment at 284–304 (AEVLCLGLVSVTVFMLVMPLF) threads the bilayer. Residues 305-393 (KATGGVLLQM…QDLTLQTDYT (89 aa)) lie on the Cytoplasmic side of the membrane.

This sequence belongs to the cation diffusion facilitator (CDF) transporter (TC 2.A.4) family.

It localises to the vacuole membrane. Its function is as follows. Involved in sequestration of excess metal in the cytoplasm into vacuoles to maintain metal homeostasis. This Arabidopsis thaliana (Mouse-ear cress) protein is Metal tolerance protein C2 (MTPC2).